The following is a 212-amino-acid chain: Superoxide dismutase [Fe] 1, chloroplastic (212 aa).

Alanine 2 carries the post-translational modification N-acetylalanine. Residues histidine 35, histidine 87, aspartate 169, and histidine 173 each coordinate Fe cation.

This sequence belongs to the iron/manganese superoxide dismutase family. In terms of assembly, homodimer. Interacts with cpn20/cpn21. Requires Fe cation as cofactor.

The protein localises to the cell membrane. It localises to the plastid. It is found in the chloroplast membrane. Its subcellular location is the chloroplast stroma. The enzyme catalyses 2 superoxide + 2 H(+) = H2O2 + O2. Its activity is regulated as follows. Activated by cpn20/cpn21. Destroys superoxide anion radicals which are normally produced within the cells and which are toxic to biological systems. The protein is Superoxide dismutase [Fe] 1, chloroplastic (FSD1) of Arabidopsis thaliana (Mouse-ear cress).